The chain runs to 199 residues: Pneumococcal vaccine antigen A homolog (199 aa).

The protein localises to the cell surface. This Streptococcus pyogenes serotype M3 (strain ATCC BAA-595 / MGAS315) protein is Pneumococcal vaccine antigen A homolog (pvaA).